Reading from the N-terminus, the 561-residue chain is Carboxylesterase 4A (561 aa).

The first 20 residues, 1 to 20 (MRWILCWSLTLCLMAQTALG), serve as a signal peptide directing secretion. Cys-88 and Cys-116 are joined by a disulfide. A glycan (N-linked (GlcNAc...) asparagine) is linked at Asn-214. The Acyl-ester intermediate role is filled by Ser-221. Cysteines 273 and 284 form a disulfide. A glycan (N-linked (GlcNAc...) asparagine) is linked at Asn-276. The active-site Charge relay system is Glu-353. Residue Asn-388 is glycosylated (N-linked (GlcNAc...) asparagine). His-467 acts as the Charge relay system in catalysis.

The protein belongs to the type-B carboxylesterase/lipase family.

The protein resides in the secreted. Functionally, probable carboxylesterase. The polypeptide is Carboxylesterase 4A (CES4A) (Homo sapiens (Human)).